The following is a 466-amino-acid chain: NADPH:adrenodoxin oxidoreductase, mitochondrial (466 aa).

Residues Ala-40, Glu-61, Leu-69, and Leu-105 each coordinate FAD. Residues 176 to 179 (QGNV), 220 to 221 (RR), and Glu-232 contribute to the NADP(+) site. Residues Trp-379 and 386–388 (GVI) contribute to the FAD site. Gly-386 contacts NADP(+).

It belongs to the ferredoxin--NADP reductase type 1 family. FAD is required as a cofactor. As to expression, expressed predominantly in prothoracic gland of the larval ring gland and nurse cells of the adult ovary. Low expression is all adult tissues examined.

Its subcellular location is the mitochondrion inner membrane. It carries out the reaction 2 reduced [adrenodoxin] + NADP(+) + H(+) = 2 oxidized [adrenodoxin] + NADPH. Its pathway is steroid metabolism; cholesterol metabolism. Required for synthesis of steroid hormones, for olfactory sensory behavior and completion of the second larval molt (a steroid mediated developmental transition) and pupariation. In Drosophila melanogaster (Fruit fly), this protein is NADPH:adrenodoxin oxidoreductase, mitochondrial (dare).